We begin with the raw amino-acid sequence, 340 residues long: GTP 3',8-cyclase (340 aa).

The Radical SAM core domain occupies 20–246; the sequence is RFQRQYTYLR…PKAVNDGPAK (227 aa). Arg29 is a GTP binding site. [4Fe-4S] cluster-binding residues include Cys36 and Cys40. Tyr42 serves as a coordination point for S-adenosyl-L-methionine. Cys43 serves as a coordination point for [4Fe-4S] cluster. Arg79 lines the GTP pocket. Residue Gly83 coordinates S-adenosyl-L-methionine. Residue Thr110 coordinates GTP. S-adenosyl-L-methionine is bound at residue Ser134. Lys171 contributes to the GTP binding site. An S-adenosyl-L-methionine-binding site is contributed by Met205. Residues Cys268 and Cys271 each coordinate [4Fe-4S] cluster. 273–275 lines the GTP pocket; it reads RLR. Cys285 is a [4Fe-4S] cluster binding site.

This sequence belongs to the radical SAM superfamily. MoaA family. Monomer and homodimer. The cofactor is [4Fe-4S] cluster.

It carries out the reaction GTP + AH2 + S-adenosyl-L-methionine = (8S)-3',8-cyclo-7,8-dihydroguanosine 5'-triphosphate + 5'-deoxyadenosine + L-methionine + A + H(+). It functions in the pathway cofactor biosynthesis; molybdopterin biosynthesis. In terms of biological role, catalyzes the cyclization of GTP to (8S)-3',8-cyclo-7,8-dihydroguanosine 5'-triphosphate. The sequence is that of GTP 3',8-cyclase from Haemophilus ducreyi (strain 35000HP / ATCC 700724).